A 273-amino-acid polypeptide reads, in one-letter code: Undecaprenyl-diphosphatase (273 aa).

8 helical membrane passes run Ile-4–Ile-24, Phe-45–Phe-65, Thr-84–Phe-104, Phe-112–Ile-132, Ile-149–Thr-169, Tyr-187–Leu-207, Ala-219–Ile-239, and Phe-251–Leu-271.

Belongs to the UppP family.

It localises to the cell membrane. It carries out the reaction di-trans,octa-cis-undecaprenyl diphosphate + H2O = di-trans,octa-cis-undecaprenyl phosphate + phosphate + H(+). Functionally, catalyzes the dephosphorylation of undecaprenyl diphosphate (UPP). Confers resistance to bacitracin. This chain is Undecaprenyl-diphosphatase, found in Lachnoclostridium phytofermentans (strain ATCC 700394 / DSM 18823 / ISDg) (Clostridium phytofermentans).